The primary structure comprises 116 residues: Putative pterin-4-alpha-carbinolamine dehydratase 1 (116 aa).

The protein belongs to the pterin-4-alpha-carbinolamine dehydratase family.

The enzyme catalyses (4aS,6R)-4a-hydroxy-L-erythro-5,6,7,8-tetrahydrobiopterin = (6R)-L-erythro-6,7-dihydrobiopterin + H2O. The polypeptide is Putative pterin-4-alpha-carbinolamine dehydratase 1 (Gloeobacter violaceus (strain ATCC 29082 / PCC 7421)).